The chain runs to 449 residues: Glycerol-3-phosphate acyltransferase 3 (449 aa).

The next 3 membrane-spanning stretches (helical) occupy residues F9–F29, I146–L166, and I170–L190. Residues H238–D243 carry the HXXXXD motif motif. A helical transmembrane segment spans residues M358–L378.

This sequence belongs to the 1-acyl-sn-glycerol-3-phosphate acyltransferase family.

The protein resides in the endoplasmic reticulum membrane. The catalysed reaction is sn-glycerol 3-phosphate + an acyl-CoA = a 1-acyl-sn-glycero-3-phosphate + CoA. The enzyme catalyses a 1-acyl-sn-glycero-3-phosphate + an acyl-CoA = a 1,2-diacyl-sn-glycero-3-phosphate + CoA. It catalyses the reaction dodecanoyl-CoA + sn-glycerol 3-phosphate = 1-dodecanoyl-sn-glycerol 3-phosphate + CoA. It carries out the reaction sn-glycerol 3-phosphate + hexadecanoyl-CoA = 1-hexadecanoyl-sn-glycero-3-phosphate + CoA. The catalysed reaction is sn-glycerol 3-phosphate + (9Z)-octadecenoyl-CoA = 1-(9Z-octadecenoyl)-sn-glycero-3-phosphate + CoA. The enzyme catalyses (9Z,12Z)-octadecadienoyl-CoA + sn-glycerol 3-phosphate = 1-(9Z,12Z)-octadecadienoyl-sn-glycero-3-phosphate + CoA. It catalyses the reaction 1-tetradecanoyl-sn-glycerol 3-phosphate + (9Z)-octadecenoyl-CoA = 1-tetradecanoyl-2-(9Z)-octadecenoyl-sn-glycero-3-phosphate + CoA. It carries out the reaction 1-hexadecanoyl-sn-glycero-3-phosphate + (9Z)-octadecenoyl-CoA = 1-hexadecanoyl-2-(9Z-octadecenoyl)-sn-glycero-3-phosphate + CoA. The catalysed reaction is 1-(9Z-octadecenoyl)-sn-glycero-3-phosphate + (9Z)-octadecenoyl-CoA = 1,2-di-(9Z-octadecenoyl)-sn-glycero-3-phosphate + CoA. The enzyme catalyses 1-(6Z,9Z,12Z-octadecatrienoyl)-sn-glycero-3-phosphate + (9Z)-octadecenoyl-CoA = (6Z,9Z,12Z)-octadecatrienoyl-2-(9Z)-octadecenoyl-sn-glycero-3-phosphate + CoA. It catalyses the reaction 1-(9Z,12Z,15Z)-octadecatrienoyl-sn-glycero-3-phosphate + (9Z)-octadecenoyl-CoA = 1-(9Z,12Z,15Z)-octadecatrienoyl-2-(9Z)-octadecenoyl-sn-glycero-3-phosphate + CoA. It carries out the reaction 1-(9Z-octadecenoyl)-sn-glycero-3-phosphate + tetradecanoyl-CoA = 1-(9Z)-octadecenoyl-2-tetradecanoyl-sn-glycero-3-phosphate + CoA. The catalysed reaction is 1-(9Z-octadecenoyl)-sn-glycero-3-phosphate + hexadecanoyl-CoA = 1-(9Z)-octadecenoyl-2-hexadecanoyl-sn-glycero-3-phosphate + CoA. The enzyme catalyses 1-(9Z-octadecenoyl)-sn-glycero-3-phosphate + octadecanoyl-CoA = 1-(9Z-octadecenoyl)-2-octadecanoyl-sn-glycero-3-phosphate + CoA. It catalyses the reaction 1-(9Z-octadecenoyl)-sn-glycero-3-phosphate + (9Z,12Z)-octadecadienoyl-CoA = 1-(9Z)-octadecenoyl-2-(9Z,12Z)-octadecadienoyl-sn-glycero-3-phosphate + CoA. It carries out the reaction 1-(5Z,8Z,11Z,14Z-eicosatetraenoyl)-sn-glycero-3-phosphate + (9Z)-octadecenoyl-CoA = 1-(5Z,8Z,11Z,14Z)-eicosatetraenoyl-2-(9Z)-octadecenoyl-sn-glycero-3-phosphate + CoA. Its pathway is glycerolipid metabolism; triacylglycerol biosynthesis. It participates in phospholipid metabolism; CDP-diacylglycerol biosynthesis; CDP-diacylglycerol from sn-glycerol 3-phosphate: step 1/3. In terms of biological role, converts glycerol-3-phosphate to 1-acyl-sn-glycerol-3-phosphate (lysophosphatidic acid or LPA) by incorporating an acyl moiety at the sn-1 position of the glycerol backbone. Also converts LPA into 1,2-diacyl-sn-glycerol-3-phosphate (phosphatidic acid or PA) by incorporating an acyl moiety at the sn-2 position of the glycerol backbone. Protects cells against lipotoxicity. The chain is Glycerol-3-phosphate acyltransferase 3 from Danio rerio (Zebrafish).